A 323-amino-acid polypeptide reads, in one-letter code: Aquaporin-4 (323 aa).

Topologically, residues 1–36 are cytoplasmic; sequence MSDRPAARRWGKCGPLCTRESIMVAFKGVWTQTFWK. 2 S-palmitoyl cysteine lipidation sites follow: Cys13 and Cys17. The helical transmembrane segment at 37-57 threads the bilayer; sequence AVTAEFLAMLIFVLLSLGSTI. At 58–69 the chain is on the extracellular side; sequence NWGGAEKPLPVD. The chain crosses the membrane as a helical span at residues 70–89; the sequence is MVLISLCFGLSIATMVQCFG. Over 90-93 the chain is Cytoplasmic; that stretch reads HISG. The segment at residues 94–101 is an intramembrane region (discontinuously helical); it reads GHINPAVT. Positions 97 to 99 match the NPA 1 motif; the sequence is NPA. Topologically, residues 102–115 are cytoplasmic; sequence VAMVCTRRISIAKS. Phosphoserine; by PKG is present on Ser111. The helical transmembrane segment at 116-136 threads the bilayer; the sequence is VFYIAAQCLGAIIGAGILYLV. Topologically, residues 137 to 155 are extracellular; it reads TPPSVVGGLGVTTVHGNLS. N-linked (GlcNAc...) asparagine glycosylation is present at Asn153. A helical transmembrane segment spans residues 156 to 176; it reads AGHGLLVELIITFQLVFTIFA. Topologically, residues 177 to 184 are cytoplasmic; the sequence is SCDSKRTD. The residue at position 180 (Ser180) is a Phosphoserine; by PKC. The chain crosses the membrane as a helical span at residues 185 to 205; sequence VTGSIALAIGISVAIGHLFAI. The N-linked (GlcNAc...) asparagine glycan is linked to Asn206. Over 206–208 the chain is Extracellular; it reads NYT. Positions 209 to 222 form an intramembrane region, discontinuously helical; the sequence is GASMNPARSFGPAV. The NPA 2 signature appears at 213–215; sequence NPA. The Extracellular portion of the chain corresponds to 223 to 231; sequence IMGNWENHW. A helical membrane pass occupies residues 232-252; that stretch reads IYWVGPIIGAVLAGGLYEYVF. The Cytoplasmic portion of the chain corresponds to 253–323; sequence CPDVELKRRF…DPSGEVLSSV (71 aa). Phosphoserine is present on residues Ser276 and Ser285. Thr289 is modified (phosphothreonine). Residue Ser321 is modified to Phosphoserine.

Belongs to the MIP/aquaporin (TC 1.A.8) family. Homotetramer. The tetramers can form oligomeric arrays in membranes. The size of the oligomers differs between tissues and is smaller in skeletal muscle than in brain. Interaction between AQP4 oligomeric arrays in close-by cells can contribute to cell-cell adhesion. Part of a complex containing MLC1, TRPV4, HEPACAM and ATP1B1. Phosphorylation by PKC at Ser-180 reduces conductance by 50%. Phosphorylation by PKG at Ser-111 in response to glutamate increases conductance by 40%. Post-translationally, isoform 2: Palmitoylated on its N-terminal region. Isoform 1: Not palmitoylated. Detected in brain and lung.

The protein localises to the cell membrane. The protein resides in the basolateral cell membrane. It is found in the endosome membrane. Its subcellular location is the sarcolemma. It localises to the cell projection. The catalysed reaction is H2O(in) = H2O(out). In terms of biological role, forms a water-specific channel. Plays an important role in brain water homeostasis and in glymphatic solute transport. Required for a normal rate of water exchange across the blood brain interface. Required for normal levels of cerebrospinal fluid influx into the brain cortex and parenchyma along paravascular spaces that surround penetrating arteries, and for normal drainage of interstitial fluid along paravenous drainage pathways. Thereby, it is required for normal clearance of solutes from the brain interstitial fluid, including soluble beta-amyloid peptides derived from APP. Plays a redundant role in urinary water homeostasis and urinary concentrating ability. The sequence is that of Aquaporin-4 (AQP4) from Bos taurus (Bovine).